The primary structure comprises 432 residues: Transcobalamin-2 (432 aa).

A signal peptide spans 1–18 (MGHLGALLFLLGGLGALA). Intrachain disulfides connect Cys-21/Cys-270, Cys-116/Cys-312, and Cys-165/Cys-208. Residue Asn-94 is glycosylated (N-linked (GlcNAc...) asparagine). Cob(II)alamin-binding positions include Gln-104, 152 to 156 (TSYYQ), His-193, 193 to 197 (HVSVD), Asn-245, Ser-248, Gln-294, and 400 to 402 (WQV).

This sequence belongs to the eukaryotic cobalamin transport proteins family. As to quaternary structure, interacts with CD320 (via LDL-receptor class A domains). In terms of tissue distribution, expressed in mammary gland, kidney, lymphatic nodes and liver.

The protein resides in the secreted. Its function is as follows. Primary vitamin B12-binding and transport protein. Delivers cobalamin to cells. This chain is Transcobalamin-2 (TCN2), found in Bos taurus (Bovine).